Reading from the N-terminus, the 165-residue chain is Nucleotide-binding protein P9211_04811 (165 aa).

It belongs to the YajQ family.

Nucleotide-binding protein. This chain is Nucleotide-binding protein P9211_04811, found in Prochlorococcus marinus (strain MIT 9211).